We begin with the raw amino-acid sequence, 149 residues long: Protein SprT-like (149 aa).

One can recognise a SprT-like domain in the interval 6–147 (LQALVEQISI…VCGRCRSKLK (142 aa)). Histidine 67 contributes to the Zn(2+) binding site. The active site involves glutamate 68. Residue histidine 71 coordinates Zn(2+).

Belongs to the SprT family. It depends on Zn(2+) as a cofactor.

The protein localises to the cytoplasm. In Geobacillus kaustophilus (strain HTA426), this protein is Protein SprT-like.